A 123-amino-acid chain; its full sequence is UPF0102 protein PSEEN4497 (123 aa).

This sequence belongs to the UPF0102 family.

The polypeptide is UPF0102 protein PSEEN4497 (Pseudomonas entomophila (strain L48)).